Consider the following 462-residue polypeptide: Glycerol-3-phosphate dehydrogenase [NAD(+)] GPDHC1, cytosolic (462 aa).

Residues 48–53 (GAGAWG), Lys-196, and Ala-235 each bind NAD(+). Lys-196 lines the substrate pocket. The Proton acceptor role is filled by Lys-285. NAD(+) is bound by residues Arg-347 and Gln-375. 347–348 (RN) contacts substrate.

The protein belongs to the NAD-dependent glycerol-3-phosphate dehydrogenase family. Expressed in roots, leaves, flowers and siliques.

The protein localises to the cytoplasm. The protein resides in the cytosol. It catalyses the reaction sn-glycerol 3-phosphate + NAD(+) = dihydroxyacetone phosphate + NADH + H(+). Its function is as follows. Involved in cell redox homeostasis. Required for maintaining a steady state cellular NADH/NAD(+) ratio through a mitochondrial glycerol-3-phosphate redox shuttle. May function with the mitochondrial FAD-dependent glycerol-3-phosphate dehydrogenase SDP6 to shuttle reducing equivalents into the mitochondria for respiration. This is Glycerol-3-phosphate dehydrogenase [NAD(+)] GPDHC1, cytosolic (GPDHC1) from Arabidopsis thaliana (Mouse-ear cress).